The chain runs to 201 residues: Nuclear protein UL4 (201 aa).

Belongs to the alphaherpesvirinae HHV-1 UL4 family.

It localises to the host nucleus. The protein is Nuclear protein UL4 of Human herpesvirus 2 (strain HG52) (HHV-2).